Reading from the N-terminus, the 254-residue chain is MDKLIIGGVEIKNRLFVGSGKYPSNEIIKDVLEGSGSQVITLALRRVDLDNKEEDILQNIPKDVILLPNTSGATNAEEAIRIARIARAMGCGNWIKIEVISDSKYLLPDNEETIKATKVLADEGFIVLPYMCPDLYAGRRLIEAGAAAVMPLGAPIGSNRGLKTKELIQIMIDELDIPIIVDAGIGKPSQAMEAMEMGAAACLVNTAIASSEDPINMARAFKMAVEGGRLAYEAKMGRESKFGNASSPLTGFLD.

The active-site Schiff-base intermediate with DXP is the Lys-96. Residues Gly-157, 183-184, and 205-206 each bind 1-deoxy-D-xylulose 5-phosphate; these read AG and NT.

The protein belongs to the ThiG family. As to quaternary structure, homotetramer. Forms heterodimers with either ThiH or ThiS.

It is found in the cytoplasm. The catalysed reaction is [ThiS sulfur-carrier protein]-C-terminal-Gly-aminoethanethioate + 2-iminoacetate + 1-deoxy-D-xylulose 5-phosphate = [ThiS sulfur-carrier protein]-C-terminal Gly-Gly + 2-[(2R,5Z)-2-carboxy-4-methylthiazol-5(2H)-ylidene]ethyl phosphate + 2 H2O + H(+). It participates in cofactor biosynthesis; thiamine diphosphate biosynthesis. Its function is as follows. Catalyzes the rearrangement of 1-deoxy-D-xylulose 5-phosphate (DXP) to produce the thiazole phosphate moiety of thiamine. Sulfur is provided by the thiocarboxylate moiety of the carrier protein ThiS. In vitro, sulfur can be provided by H(2)S. The polypeptide is Thiazole synthase (Clostridium perfringens (strain SM101 / Type A)).